An 84-amino-acid polypeptide reads, in one-letter code: Small ribosomal subunit protein uS15 (84 aa).

This sequence belongs to the universal ribosomal protein uS15 family. As to quaternary structure, part of the 30S ribosomal subunit. Forms a bridge to the 50S subunit in the 70S ribosome, contacting the 23S rRNA.

In terms of biological role, one of the primary rRNA binding proteins, it binds directly to 16S rRNA where it helps nucleate assembly of the platform of the 30S subunit by binding and bridging several RNA helices of the 16S rRNA. Functionally, forms an intersubunit bridge (bridge B4) with the 23S rRNA of the 50S subunit in the ribosome. This is Small ribosomal subunit protein uS15 from Thermosipho africanus (strain TCF52B).